Consider the following 962-residue polypeptide: Integrator complex subunit 7 (962 aa).

Phosphoserine is present on residues serine 338 and serine 809.

The protein belongs to the Integrator subunit 7 family. Component of the Integrator complex, composed of core subunits INTS1, INTS2, INTS3, INTS4, INTS5, INTS6, INTS7, INTS8, INTS9/RC74, INTS10, INTS11/CPSF3L, INTS12, INTS13, INTS14 and INTS15. The core complex associates with protein phosphatase 2A subunits PPP2CA and PPP2R1A, to form the Integrator-PP2A (INTAC) complex. Interacts with NABP2.

The protein resides in the nucleus. It is found in the chromosome. It localises to the cytoplasm. In terms of biological role, component of the integrator complex, a multiprotein complex that terminates RNA polymerase II (Pol II) transcription in the promoter-proximal region of genes. The integrator complex provides a quality checkpoint during transcription elongation by driving premature transcription termination of transcripts that are unfavorably configured for transcriptional elongation: the complex terminates transcription by (1) catalyzing dephosphorylation of the C-terminal domain (CTD) of Pol II subunit POLR2A/RPB1 and SUPT5H/SPT5, (2) degrading the exiting nascent RNA transcript via endonuclease activity and (3) promoting the release of Pol II from bound DNA. The integrator complex is also involved in terminating the synthesis of non-coding Pol II transcripts, such as enhancer RNAs (eRNAs), small nuclear RNAs (snRNAs), telomerase RNAs and long non-coding RNAs (lncRNAs). May be not involved in the recruitment of cytoplasmic dynein to the nuclear envelope by different components of the INT complex. Plays a role in DNA damage response (DDR) signaling during the S phase. The chain is Integrator complex subunit 7 (INTS7) from Bos taurus (Bovine).